An 836-amino-acid chain; its full sequence is Periostin (836 aa).

An N-terminal signal peptide occupies residues 1-21; the sequence is MIPFLPMFSLLLLLIVNPINA. Positions 40–94 constitute an EMI domain; it reads GPNVCALQQILGTKKKYFSTCKNWYKKSICGQKTTVLYECCPGYMRMEGMKGCPA. 5 disulfides stabilise this stretch: Cys44–Cys80, Cys69–Cys333, Cys79–Cys92, Cys208–Cys311, and Cys467–Cys472. Cys60 carries the S-cysteinyl cysteine modification. 4 consecutive FAS1 domains span residues 97–230, 234–365, 368–492, and 496–628; these read PIDH…DRVL, GTSI…DQVL, DSAK…REII, and EKSL…DKLL. Residue Asn599 is glycosylated (N-linked (GlcNAc...) asparagine).

Homodimer. Interacts with BMP1 and fibronectin. In terms of processing, gamma-carboxylation is controversial. Gamma-carboxyglutamated; gamma-carboxyglutamate residues are formed by vitamin K dependent carboxylation; this may be required for calcium binding. According to a more recent report, does not contain vitamin K-dependent gamma-carboxyglutamate residues. In terms of tissue distribution, widely expressed with highest levels in aorta, stomach, lower gastrointestinal tract, placenta, uterus, thyroid tissue and breast. Expressed in the kidney. Expressed in the lung. Up-regulated in epithelial ovarian tumors. Not expressed in normal ovaries. Also highly expressed at the tumor periphery of lung carcinoma tissue but not within the tumor. Overexpressed in breast cancers.

It is found in the golgi apparatus. It localises to the secreted. The protein resides in the extracellular space. Its subcellular location is the extracellular matrix. In terms of biological role, induces cell attachment and spreading and plays a role in cell adhesion. Enhances incorporation of BMP1 in the fibronectin matrix of connective tissues, and subsequent proteolytic activation of lysyl oxidase LOX. The polypeptide is Periostin (POSTN) (Homo sapiens (Human)).